The following is a 275-amino-acid chain: Large ribosomal subunit protein uL2c (275 aa).

The disordered stretch occupies residues 219-254 (TVRGSVMNPCDHPHGGGEGRAPIGRTRPLTPWGKPA).

Belongs to the universal ribosomal protein uL2 family. Part of the 50S ribosomal subunit.

It is found in the plastid. The protein localises to the chloroplast. The protein is Large ribosomal subunit protein uL2c (rpl2) of Phaeodactylum tricornutum (strain CCAP 1055/1).